The chain runs to 483 residues: Centrosomal protein cep57l1 (483 aa).

Residues 94-228 (EHKKVLESEK…AQVQTSLEVN (135 aa)) are a coiled coil. Disordered stretches follow at residues 237-261 (AQNS…SKEP), 303-325 (PQVS…GGSR), and 416-460 (KEQP…SKAS). The span at 243-252 (RKVKKKKQSK) shows a compositional bias: basic residues. A coiled-coil region spans residues 375–418 (EDLERELDYVVKQMEIKSDQIMKLKRHQLNVNKLKKTAKLLKEQ). A compositionally biased stretch (polar residues) spans 420–435 (RPTSVTKLAADKQNTG).

It belongs to the translokin family. In terms of assembly, interacts with clip1, mis12, ndc80 and zwint. Interacts with gamma-tubulin.

The protein resides in the cytoplasm. It is found in the cytoskeleton. The protein localises to the microtubule organizing center. Its subcellular location is the centrosome. It localises to the chromosome. The protein resides in the centromere. It is found in the kinetochore. The protein localises to the spindle. Functionally, required for spindle microtubule attachment to both kinetochores and centrosomes. Also functions to tether minus-ends of spindle microtubules to centrosomes. May act by forming ring-like structures around microtubules, or by serving as a cross-linker or scaffold at the attachment site. The protein is Centrosomal protein cep57l1 (cep57l1) of Xenopus tropicalis (Western clawed frog).